Reading from the N-terminus, the 143-residue chain is Small ribosomal subunit protein bS6 (143 aa).

Residues 98–143 (TEQSLIMKSKDEKGDKPERSERRRRDDEEGEAPAANDNDGDNAEAA) are disordered. Residues 105-124 (KSKDEKGDKPERSERRRRDD) are compositionally biased toward basic and acidic residues.

It belongs to the bacterial ribosomal protein bS6 family.

Binds together with bS18 to 16S ribosomal RNA. The sequence is that of Small ribosomal subunit protein bS6 from Xanthomonas euvesicatoria pv. vesicatoria (strain 85-10) (Xanthomonas campestris pv. vesicatoria).